An 88-amino-acid polypeptide reads, in one-letter code: MATKKGASSSSNGRDSEAKRLGVKRFGGQQVNAGEILVRQRGTKFHPGENVGRGGDDTLFALKTGAVQFSTKRNRRMVNIVENEAVDA.

Residues 1 to 13 (MATKKGASSSSNG) are compositionally biased toward polar residues. A disordered region spans residues 1–25 (MATKKGASSSSNGRDSEAKRLGVKR).

It belongs to the bacterial ribosomal protein bL27 family.

This Corynebacterium efficiens (strain DSM 44549 / YS-314 / AJ 12310 / JCM 11189 / NBRC 100395) protein is Large ribosomal subunit protein bL27.